The primary structure comprises 347 residues: GMP reductase (347 aa).

108–131 (NDFLKLQRILALSPALRFICVDVA) lines the NADP(+) pocket. The K(+) site is built by glycine 181 and glycine 183. Cysteine 186 acts as the Thioimidate intermediate in catalysis. Residue 216–239 (IVGDGGCTCPGDVAKAFGGGADFV) coordinates NADP(+).

Belongs to the IMPDH/GMPR family. GuaC type 1 subfamily. In terms of assembly, homotetramer.

The enzyme catalyses IMP + NH4(+) + NADP(+) = GMP + NADPH + 2 H(+). Its function is as follows. Catalyzes the irreversible NADPH-dependent deamination of GMP to IMP. It functions in the conversion of nucleobase, nucleoside and nucleotide derivatives of G to A nucleotides, and in maintaining the intracellular balance of A and G nucleotides. The polypeptide is GMP reductase (Tolumonas auensis (strain DSM 9187 / NBRC 110442 / TA 4)).